Consider the following 76-residue polypeptide: UPF0154 protein Exig_1099 (76 aa).

A helical membrane pass occupies residues 4–24 (WIWILIALLCLVAGVALGFYI). A disordered region spans residues 54 to 76 (KPSQKKVNQVMRSMSGSMKSPKK).

Belongs to the UPF0154 family.

Its subcellular location is the cell membrane. The protein is UPF0154 protein Exig_1099 of Exiguobacterium sibiricum (strain DSM 17290 / CCUG 55495 / CIP 109462 / JCM 13490 / 255-15).